The following is a 195-amino-acid chain: Molybdenum cofactor guanylyltransferase (195 aa).

GTP contacts are provided by residues 10–12 (LAG), Lys23, Asn51, Asp69, and Asp99. Asp99 is a Mg(2+) binding site.

Belongs to the MobA family. As to quaternary structure, monomer. Mg(2+) serves as cofactor.

Its subcellular location is the cytoplasm. The enzyme catalyses Mo-molybdopterin + GTP + H(+) = Mo-molybdopterin guanine dinucleotide + diphosphate. Transfers a GMP moiety from GTP to Mo-molybdopterin (Mo-MPT) cofactor (Moco or molybdenum cofactor) to form Mo-molybdopterin guanine dinucleotide (Mo-MGD) cofactor. This Histophilus somni (strain 129Pt) (Haemophilus somnus) protein is Molybdenum cofactor guanylyltransferase.